Reading from the N-terminus, the 155-residue chain is Sec-independent protein translocase protein TatB (155 aa).

Residues M1–G21 form a helical membrane-spanning segment. Disordered regions lie at residues A81–F103 and S131–A155. Residues S89–D98 show a composition bias toward polar residues.

Belongs to the TatB family. As to quaternary structure, the Tat system comprises two distinct complexes: a TatABC complex, containing multiple copies of TatA, TatB and TatC subunits, and a separate TatA complex, containing only TatA subunits. Substrates initially bind to the TatABC complex, which probably triggers association of the separate TatA complex to form the active translocon.

The protein localises to the cell inner membrane. Part of the twin-arginine translocation (Tat) system that transports large folded proteins containing a characteristic twin-arginine motif in their signal peptide across membranes. Together with TatC, TatB is part of a receptor directly interacting with Tat signal peptides. TatB may form an oligomeric binding site that transiently accommodates folded Tat precursor proteins before their translocation. This chain is Sec-independent protein translocase protein TatB, found in Polaromonas naphthalenivorans (strain CJ2).